The following is a 390-amino-acid chain: Probable purine permease 18 (390 aa).

The span at 1-14 (MEMTEASKQTTAEG) shows a compositional bias: polar residues. Residues 1–23 (MEMTEASKQTTAEGSANPEPDQI) form a disordered region. Position 25 is a phosphoserine (Ser25). A run of 10 helical transmembrane segments spans residues 39-59 (ISVS…MLLL), 81-101 (WLQA…FFIF), 120-140 (LILL…LFAL), 148-168 (GVFT…AAII), 176-196 (WIIL…PEFG), 211-231 (WLTF…QLCF), 250-270 (VIEM…VGLF), 297-317 (IGLA…VLYV), 324-344 (VVHM…FDFM), and 348-368 (FSWP…SYFY).

This sequence belongs to the purine permeases (TC 2.A.7.14) family.

Its subcellular location is the membrane. The chain is Probable purine permease 18 (PUP18) from Arabidopsis thaliana (Mouse-ear cress).